Reading from the N-terminus, the 286-residue chain is Bifunctional protein FolD (286 aa).

NADP(+)-binding positions include 163-165, Ile-188, and Ile-229; that span reads GMS.

The protein belongs to the tetrahydrofolate dehydrogenase/cyclohydrolase family. In terms of assembly, homodimer.

The enzyme catalyses (6R)-5,10-methylene-5,6,7,8-tetrahydrofolate + NADP(+) = (6R)-5,10-methenyltetrahydrofolate + NADPH. It catalyses the reaction (6R)-5,10-methenyltetrahydrofolate + H2O = (6R)-10-formyltetrahydrofolate + H(+). The protein operates within one-carbon metabolism; tetrahydrofolate interconversion. In terms of biological role, catalyzes the oxidation of 5,10-methylenetetrahydrofolate to 5,10-methenyltetrahydrofolate and then the hydrolysis of 5,10-methenyltetrahydrofolate to 10-formyltetrahydrofolate. This chain is Bifunctional protein FolD, found in Helicobacter hepaticus (strain ATCC 51449 / 3B1).